The primary structure comprises 178 residues: Large ribosomal subunit protein uL10 (178 aa).

This sequence belongs to the universal ribosomal protein uL10 family. Part of the ribosomal stalk of the 50S ribosomal subunit. The N-terminus interacts with L11 and the large rRNA to form the base of the stalk. The C-terminus forms an elongated spine to which L12 dimers bind in a sequential fashion forming a multimeric L10(L12)X complex.

In terms of biological role, forms part of the ribosomal stalk, playing a central role in the interaction of the ribosome with GTP-bound translation factors. The protein is Large ribosomal subunit protein uL10 of Gloeothece citriformis (strain PCC 7424) (Cyanothece sp. (strain PCC 7424)).